We begin with the raw amino-acid sequence, 139 residues long: Desampylase (139 aa).

An MPN domain is found at 6–139 (LSLAADARDS…EFRELSVAVE (134 aa)). E31 functions as the Proton donor/acceptor in the catalytic mechanism. Zn(2+)-binding residues include H88, H90, and D101. Positions 88–101 (HSHPESDPVPSATD) match the JAMM motif motif.

Belongs to the peptidase M67B family. In terms of assembly, monomer. Zn(2+) is required as a cofactor.

It catalyses the reaction an N(6)-[small archaeal modifier protein]-[protein]-L-lysine + H2O = a [protein]-L-lysine + a [small archaeal modifier protein].. Inhibited by EDTA and N-ethylmaleimide (NEM) in vitro. Metalloprotease that displays desampylase (DSAMP) activity, cleaving ubiquitin-like small archaeal modifier proteins (SAMP1, SAMP2 and SAMP3) from protein conjugates (isopeptide- and linear-linked). Thus, likely regulates sampylation and the pools of 'free' SAMP available for protein modification. Functions as a specific and not a general protease since it is unable to hydrolyze a variety of unmodified proteins otherwise hydrolyzed by proteinase K. The polypeptide is Desampylase (Haloferax volcanii (strain ATCC 29605 / DSM 3757 / JCM 8879 / NBRC 14742 / NCIMB 2012 / VKM B-1768 / DS2) (Halobacterium volcanii)).